Consider the following 944-residue polypeptide: MEYNFREIEKKWQQRWAENHTYQVTEDESKKKFYVLNMFPYPSGAGLHVGHPLGYIASDIYARYKRLQGFNVLNPMGYDAYGLPAEQYAIQTGQHPAITTVNNINRYREQLDKIGFSFDWNREVRTCEPGYYHWTQWAFQQMFNSYYCNDTQQARPISELTEAFARYGNEGLNAACSEELSFTAEEWNAKSEKEQQEILMNYRIAYLGETMVNWCPQLGTVLANDEVVDGVSERGGFPVVQKKMRQWCLRVSAYAQRLLDGLDTVDWTDSLKETQRNWIGRSEGTEVQFKVKDSDIEFTIFTTRADTMFGVTFMVLAPESELVPQLTTEAQKAEVEAYLDRTKKRTERERIADRRVTGVFSGSYAINPFTGEAVPVWISDYVLAGYGTGAIMAVPAHDSRDYAFAKHFNLPIVPLVEGCDVSEESFDAKEGIVCNSPRKDVTPYCDLSLNGLTIKEAIAATKEYVKAHNLGRVKVNYRLRDAIFSRQRYWGEPFPVYYKNGMPYMIDSSKLPLELPEVAKFLPTETGEPPLGHATKWAWDVEKGEVVENNLIDNVTIFPLELNTMPGFAGSSAYYLRYMDPHNAQALVSEKADHYWQNVDLYVGGTEHATGHLIYSRFWNKFLHDLGVSIKEEPFQKLVNQGMIQGRSNFVYRIKDTNTFVSLNLKDQYETTPLHVDVNIVSNDILDVEAFKAWRPEYNDAEFILEDGKYICGWAVEKMSKSMYNVVNPDMIVEKYGADTLRMYEMFLGPVEQSKPWDTNGIDGVHRFLKKLWNLFYSRTDEFLPVEGEPTKEELKAIHKLIKKVTGDIETFSYNTSISAFMICVNELTSLKCRNKEVLSNLIILLAPFAPHYAEELWEALGNTTSVCDAQWPAFNEDYLKEDTVKYTISFNGKARFTMDFAADADNNTIQTTVMADEQAQKWIEGKTPKKVIIVPKKIVNIVL.

Positions 40 to 51 match the 'HIGH' region motif; that stretch reads PYPSGAGLHVGH. A 'KMSKS' region motif is present at residues 718 to 722; sequence KMSKS. Lysine 721 is an ATP binding site.

The protein belongs to the class-I aminoacyl-tRNA synthetase family.

It localises to the cytoplasm. The catalysed reaction is tRNA(Leu) + L-leucine + ATP = L-leucyl-tRNA(Leu) + AMP + diphosphate. In Phocaeicola vulgatus (strain ATCC 8482 / DSM 1447 / JCM 5826 / CCUG 4940 / NBRC 14291 / NCTC 11154) (Bacteroides vulgatus), this protein is Leucine--tRNA ligase.